The chain runs to 454 residues: UDP-N-acetylmuramoylalanine--D-glutamate ligase (454 aa).

117 to 123 is an ATP binding site; it reads GTNGKTT.

The protein belongs to the MurCDEF family.

The protein resides in the cytoplasm. It carries out the reaction UDP-N-acetyl-alpha-D-muramoyl-L-alanine + D-glutamate + ATP = UDP-N-acetyl-alpha-D-muramoyl-L-alanyl-D-glutamate + ADP + phosphate + H(+). It participates in cell wall biogenesis; peptidoglycan biosynthesis. Its function is as follows. Cell wall formation. Catalyzes the addition of glutamate to the nucleotide precursor UDP-N-acetylmuramoyl-L-alanine (UMA). In Alkaliphilus oremlandii (strain OhILAs) (Clostridium oremlandii (strain OhILAs)), this protein is UDP-N-acetylmuramoylalanine--D-glutamate ligase.